Reading from the N-terminus, the 109-residue chain is Protein phosphatase 1 regulatory subunit 1C (109 aa).

The disordered stretch occupies residues 25–109; the sequence is AEQIRKRRPT…TNEREEQRDH (85 aa). Residues 45–54 are compositionally biased toward basic and acidic residues; sequence NPPEIDDKRG. A compositionally biased stretch (polar residues) spans 55-75; the sequence is PNTQGELQNASPKQRKQSVYT. Positions 100 to 109 are enriched in basic and acidic residues; sequence TNEREEQRDH.

This sequence belongs to the protein phosphatase inhibitor 1 family.

It localises to the cytoplasm. In terms of biological role, may increase cell susceptibility to TNF-induced apoptosis. The chain is Protein phosphatase 1 regulatory subunit 1C (PPP1R1C) from Homo sapiens (Human).